The chain runs to 130 residues: Small ribosomal subunit protein uS9 (130 aa).

Belongs to the universal ribosomal protein uS9 family.

The protein is Small ribosomal subunit protein uS9 of Desulfovibrio desulfuricans (strain ATCC 27774 / DSM 6949 / MB).